The following is a 437-amino-acid chain: Pyrophosphate--fructose 6-phosphate 1-phosphotransferase (437 aa).

Position 27 (glycine 27) interacts with diphosphate. Aspartate 122 serves as a coordination point for Mg(2+). Residues threonine 147–aspartate 149, methionine 193–arginine 195, glutamate 261, and tyrosine 323–arginine 326 each bind substrate. Residue aspartate 149 is the Proton acceptor of the active site.

This sequence belongs to the phosphofructokinase type A (PFKA) family. PPi-dependent PFK group II subfamily. Clade 'Short' sub-subfamily. In terms of assembly, homotetramer. It depends on Mg(2+) as a cofactor. Requires Mn(2+) as cofactor.

The protein resides in the cytoplasm. It catalyses the reaction beta-D-fructose 6-phosphate + diphosphate = beta-D-fructose 1,6-bisphosphate + phosphate + H(+). It functions in the pathway carbohydrate degradation; glycolysis; D-glyceraldehyde 3-phosphate and glycerone phosphate from D-glucose: step 3/4. With respect to regulation, activated by AMP. Probably promotes oligomerization of the enzyme. Its function is as follows. Catalyzes the phosphorylation of D-fructose 6-phosphate, the first committing step of glycolysis. Uses inorganic phosphate (PPi) as phosphoryl donor instead of ATP like common ATP-dependent phosphofructokinases (ATP-PFKs), which renders the reaction reversible, and can thus function both in glycolysis and gluconeogenesis. Consistently, PPi-PFK can replace the enzymes of both the forward (ATP-PFK) and reverse (fructose-bisphosphatase (FBPase)) reactions. The chain is Pyrophosphate--fructose 6-phosphate 1-phosphotransferase from Naegleria fowleri (Brain eating amoeba).